A 664-amino-acid polypeptide reads, in one-letter code: Fructose-1,6-bisphosphatase class 3 (664 aa).

It belongs to the FBPase class 3 family. Mn(2+) serves as cofactor.

The catalysed reaction is beta-D-fructose 1,6-bisphosphate + H2O = beta-D-fructose 6-phosphate + phosphate. It participates in carbohydrate biosynthesis; gluconeogenesis. The protein is Fructose-1,6-bisphosphatase class 3 of Bacteroides fragilis (strain YCH46).